A 211-amino-acid polypeptide reads, in one-letter code: Ribonuclease HII (211 aa).

Residues 21–211 (SSIAGLDEAG…APLKSMFDVI (191 aa)) form the RNase H type-2 domain. A divalent metal cation contacts are provided by Asp-27, Glu-28, and Asp-122.

The protein belongs to the RNase HII family. It depends on Mn(2+) as a cofactor. The cofactor is Mg(2+).

It is found in the cytoplasm. It catalyses the reaction Endonucleolytic cleavage to 5'-phosphomonoester.. In terms of biological role, endonuclease that specifically degrades the RNA of RNA-DNA hybrids. The sequence is that of Ribonuclease HII from Dehalococcoides mccartyi (strain ATCC BAA-2266 / KCTC 15142 / 195) (Dehalococcoides ethenogenes (strain 195)).